A 520-amino-acid polypeptide reads, in one-letter code: GMP synthase [glutamine-hydrolyzing] (520 aa).

A Glutamine amidotransferase type-1 domain is found at 9–202; it reads TILIIDFGSQ…VHRIVGVKPG (194 aa). Residue cysteine 86 is the Nucleophile of the active site. Active-site residues include histidine 176 and glutamate 178. Residues 203 to 395 enclose the GMPS ATP-PPase domain; that stretch reads WTMGAYREQA…LGLPDSFIGR (193 aa). 230-236 lines the ATP pocket; that stretch reads SGGVDSS.

In terms of assembly, homodimer.

It catalyses the reaction XMP + L-glutamine + ATP + H2O = GMP + L-glutamate + AMP + diphosphate + 2 H(+). Its pathway is purine metabolism; GMP biosynthesis; GMP from XMP (L-Gln route): step 1/1. In terms of biological role, catalyzes the synthesis of GMP from XMP. The protein is GMP synthase [glutamine-hydrolyzing] of Brucella canis (strain ATCC 23365 / NCTC 10854 / RM-666).